Consider the following 145-residue polypeptide: 3-hydroxyacyl-[acyl-carrier-protein] dehydratase FabZ (145 aa).

Residue His-48 is part of the active site.

The protein belongs to the thioester dehydratase family. FabZ subfamily.

Its subcellular location is the cytoplasm. The catalysed reaction is a (3R)-hydroxyacyl-[ACP] = a (2E)-enoyl-[ACP] + H2O. Its function is as follows. Involved in unsaturated fatty acids biosynthesis. Catalyzes the dehydration of short chain beta-hydroxyacyl-ACPs and long chain saturated and unsaturated beta-hydroxyacyl-ACPs. This chain is 3-hydroxyacyl-[acyl-carrier-protein] dehydratase FabZ, found in Geobacillus thermodenitrificans (strain NG80-2).